Reading from the N-terminus, the 504-residue chain is UDP-N-acetylmuramoylalanine--D-glutamate ligase (504 aa).

129 to 135 (GTNGKTT) contacts ATP.

The protein belongs to the MurCDEF family.

It localises to the cytoplasm. The enzyme catalyses UDP-N-acetyl-alpha-D-muramoyl-L-alanine + D-glutamate + ATP = UDP-N-acetyl-alpha-D-muramoyl-L-alanyl-D-glutamate + ADP + phosphate + H(+). Its pathway is cell wall biogenesis; peptidoglycan biosynthesis. In terms of biological role, cell wall formation. Catalyzes the addition of glutamate to the nucleotide precursor UDP-N-acetylmuramoyl-L-alanine (UMA). The chain is UDP-N-acetylmuramoylalanine--D-glutamate ligase from Cupriavidus metallidurans (strain ATCC 43123 / DSM 2839 / NBRC 102507 / CH34) (Ralstonia metallidurans).